The following is a 560-amino-acid chain: Cilia- and flagella-associated protein 184 (560 aa).

Residues 1-12 (MEGGSEHTKDPG) are compositionally biased toward basic and acidic residues. A disordered region spans residues 1 to 209 (MEGGSEHTKD…QEEGKPLGGR (209 aa)). Acidic residues-rich tracts occupy residues 41–61 (GELE…EEEA) and 101–110 (EPEEPAEAGA). 2 stretches are compositionally biased toward basic and acidic residues: residues 127–144 (AEAR…KEVR) and 179–209 (ETRR…LGGR). Coiled coils occupy residues 357 to 481 (QAAL…QGRD) and 510 to 536 (DSLL…LKRH).

This sequence belongs to the CFAP184 family. As to quaternary structure, forms a complex with CFAP263; the interaction is required for functional activity in cilia.

It localises to the cell projection. Its subcellular location is the cilium. The protein resides in the cytoplasm. It is found in the cytoskeleton. The protein localises to the microtubule organizing center. It localises to the centrosome. Functionally, in complex with CFAP263, acts as a regulator of ciliary beating that connects radial spoke 3 (RS3) to the inner dynein arm (IDA) and the nexin-dynein regulatory complex (N-DRC). The complex is positioned parallel to N-DRC and forms a connection between the arch at the base of RS3, the IDA tail and N-DRC. In Macaca fascicularis (Crab-eating macaque), this protein is Cilia- and flagella-associated protein 184 (CFAP184).